A 413-amino-acid polypeptide reads, in one-letter code: Serine hydroxymethyltransferase (413 aa).

(6S)-5,6,7,8-tetrahydrofolate-binding positions include L117 and 121-123; that span reads GHL. K226 carries the post-translational modification N6-(pyridoxal phosphate)lysine. (6S)-5,6,7,8-tetrahydrofolate is bound at residue 349-351; it reads SPF.

Belongs to the SHMT family. In terms of assembly, homodimer. The cofactor is pyridoxal 5'-phosphate.

The protein localises to the cytoplasm. The enzyme catalyses (6R)-5,10-methylene-5,6,7,8-tetrahydrofolate + glycine + H2O = (6S)-5,6,7,8-tetrahydrofolate + L-serine. It functions in the pathway one-carbon metabolism; tetrahydrofolate interconversion. Its pathway is amino-acid biosynthesis; glycine biosynthesis; glycine from L-serine: step 1/1. Catalyzes the reversible interconversion of serine and glycine with tetrahydrofolate (THF) serving as the one-carbon carrier. This reaction serves as the major source of one-carbon groups required for the biosynthesis of purines, thymidylate, methionine, and other important biomolecules. Also exhibits THF-independent aldolase activity toward beta-hydroxyamino acids, producing glycine and aldehydes, via a retro-aldol mechanism. The polypeptide is Serine hydroxymethyltransferase (Listeria monocytogenes serotype 4b (strain F2365)).